Here is a 378-residue protein sequence, read N- to C-terminus: Queuine tRNA-ribosyltransferase (378 aa).

Residue Asp89 is the Proton acceptor of the active site. Substrate contacts are provided by residues 89–93, Asp143, Gln194, and Gly221; that span reads DSGGF. The segment at 252 to 258 is RNA binding; the sequence is GVGTPAN. Asp271 acts as the Nucleophile in catalysis. The RNA binding; important for wobble base 34 recognition stretch occupies residues 276 to 280; the sequence is ARNGR. The Zn(2+) site is built by Cys309, Cys311, Cys314, and His340.

It belongs to the queuine tRNA-ribosyltransferase family. Homodimer. Within each dimer, one monomer is responsible for RNA recognition and catalysis, while the other monomer binds to the replacement base PreQ1. Zn(2+) is required as a cofactor.

The catalysed reaction is 7-aminomethyl-7-carbaguanine + guanosine(34) in tRNA = 7-aminomethyl-7-carbaguanosine(34) in tRNA + guanine. It functions in the pathway tRNA modification; tRNA-queuosine biosynthesis. Catalyzes the base-exchange of a guanine (G) residue with the queuine precursor 7-aminomethyl-7-deazaguanine (PreQ1) at position 34 (anticodon wobble position) in tRNAs with GU(N) anticodons (tRNA-Asp, -Asn, -His and -Tyr). Catalysis occurs through a double-displacement mechanism. The nucleophile active site attacks the C1' of nucleotide 34 to detach the guanine base from the RNA, forming a covalent enzyme-RNA intermediate. The proton acceptor active site deprotonates the incoming PreQ1, allowing a nucleophilic attack on the C1' of the ribose to form the product. After dissociation, two additional enzymatic reactions on the tRNA convert PreQ1 to queuine (Q), resulting in the hypermodified nucleoside queuosine (7-(((4,5-cis-dihydroxy-2-cyclopenten-1-yl)amino)methyl)-7-deazaguanosine). This Lachnoclostridium phytofermentans (strain ATCC 700394 / DSM 18823 / ISDg) (Clostridium phytofermentans) protein is Queuine tRNA-ribosyltransferase.